Reading from the N-terminus, the 173-residue chain is Translation initiation factor IF-3 (173 aa).

It belongs to the IF-3 family. Monomer.

Its subcellular location is the cytoplasm. IF-3 binds to the 30S ribosomal subunit and shifts the equilibrium between 70S ribosomes and their 50S and 30S subunits in favor of the free subunits, thus enhancing the availability of 30S subunits on which protein synthesis initiation begins. This is Translation initiation factor IF-3 from Neisseria gonorrhoeae (strain ATCC 700825 / FA 1090).